A 503-amino-acid chain; its full sequence is Catalase (503 aa).

The segment at methionine 1 to glycine 26 is disordered. Catalysis depends on residues histidine 56 and asparagine 129. Tyrosine 339 lines the heme pocket.

The protein belongs to the catalase family. In terms of assembly, homodimer. The cofactor is heme.

It carries out the reaction 2 H2O2 = O2 + 2 H2O. In terms of biological role, decomposes hydrogen peroxide into water and oxygen; serves to protect cells from the toxic effects of hydrogen peroxide. This Staphylococcus haemolyticus (strain JCSC1435) protein is Catalase (katA).